Reading from the N-terminus, the 164-residue chain is E3 ubiquitin ligase complex SCF subunit sconC (164 aa).

An interaction with the F-box domain of F-box proteins region spans residues 106–164; it reads ILAANYLDIKALLDVGCKTVANMIKGKSPEEIRKTFNIQNDFTPEEEDQIRRENEWAEE.

The protein belongs to the SKP1 family. As to quaternary structure, component of the SCF (SKP1-CUL1-F-box protein) E3 ubiquitin ligase complexes.

It participates in protein modification; protein ubiquitination. Its function is as follows. Essential component of the SCF (SKP1-CUL1-F-box protein) E3 ubiquitin ligase complexes, which mediate the ubiquitination and subsequent proteasomal degradation of target proteins. Controls sulfur metabolite repression, probably by mediating the inactivation or degradation of the metR transcription factor. In Arthroderma benhamiae (strain ATCC MYA-4681 / CBS 112371) (Trichophyton mentagrophytes), this protein is E3 ubiquitin ligase complex SCF subunit sconC (sconC).